The primary structure comprises 388 residues: 5-hydroxytryptamine receptor 4 (388 aa).

Residues 1–19 (MDKLDANVSSKEGFGSVEK) lie on the Extracellular side of the membrane. N-linked (GlcNAc...) asparagine glycosylation is present at Asn-7. Residues 20-44 (VVLLTFLSAVILMAILGNLLVMVAV) traverse the membrane as a helical segment. Residues 45-54 (CRDRQLRKIK) lie on the Cytoplasmic side of the membrane. The chain crosses the membrane as a helical span at residues 55–78 (TNYFIVSLAFADLLVSVLVMPFGA). Residues 79-92 (IELVQDIWVYGEMF) are Extracellular-facing. Residues 93–117 (CLVRTSLDVLLTTASIFHLCCISLD) traverse the membrane as a helical segment. The cysteines at positions 93 and 184 are disulfide-linked. Serotonin is bound at residue Asp-100. Over 118-133 (RYYAICCQPLVYRNKM) the chain is Cytoplasmic. The helical transmembrane segment at 134 to 157 (TPLRIALMLGGCWVIPMFISFLPI) threads the bilayer. Residues 158-188 (MQGWNNIGIVDLIEKRKFNQNSNSTYCVFMV) are Extracellular-facing. A helical membrane pass occupies residues 189–212 (NKPYAITCSVVAFYIPFLLMVLAY). The Cytoplasmic segment spans residues 213 to 257 (YRIYVTAKEHARQIQVLQRAGAPAEGRPQPADQHSTHRMRTETKA). A helical membrane pass occupies residues 258–283 (AKTLCIIMGCFCLCWAPFFVTNIVDP). Residue Asn-279 participates in serotonin binding. The Extracellular portion of the chain corresponds to 284 to 290 (FIDYTVP). The chain crosses the membrane as a helical span at residues 291–314 (GQLWTAFLWLGYINSGLNPFLYAF). At 315–388 (LNKSFRRAFL…PLVAAQPIDT (74 aa)) the chain is on the cytoplasmic side.

It belongs to the G-protein coupled receptor 1 family. In terms of assembly, interacts (via C-terminus 330-346 AA) with GRK5; this interaction is promoted by 5-HT (serotonin).

The protein localises to the cell membrane. Its subcellular location is the endosome membrane. G-protein coupled receptor for 5-hydroxytryptamine (serotonin), a biogenic hormone that functions as a neurotransmitter, a hormone and a mitogen. Ligand binding causes a conformation change that triggers signaling via guanine nucleotide-binding proteins (G proteins) and modulates the activity of downstream effectors. HTR4 is coupled to G(s) G alpha proteins and mediates activation of adenylate cyclase activity. This is 5-hydroxytryptamine receptor 4 (HTR4) from Cavia porcellus (Guinea pig).